Reading from the N-terminus, the 358-residue chain is Cholesterol galactosyltransferase (358 aa).

It belongs to the glycosyltransferase 2 family.

The enzyme catalyses cholesterol + UDP-alpha-D-galactose = cholesteryl 3-beta-D-galactoside + UDP + H(+). The protein operates within glycolipid biosynthesis. Its function is as follows. Galactosyltransferase involved in the synthesis of cholesterol glycolipids, which are formed by the use of host-derived cholesterol and have been shown to be immunogenic, and possibly contribute to Lyme disease pathogenesis. Catalyzes the formation of cholesteryl beta-D-galactopyranoside (CGal) from cholesterol and UDP-alpha-D-galactose. Cannot use GDP-mannose. This chain is Cholesterol galactosyltransferase, found in Borreliella burgdorferi (strain ATCC 35210 / DSM 4680 / CIP 102532 / B31) (Borrelia burgdorferi).